We begin with the raw amino-acid sequence, 296 residues long: Phosphate transport system permease protein PstA (296 aa).

Over 1-28 the chain is Cytoplasmic; that stretch reads MAMVEMQTTAALAESRRKMQARRRLKNR. Residues 29–50 traverse the membrane as a helical segment; it reads IALTLSMATMAFGLFWLIWILM. At 51–82 the chain is on the periplasmic side; sequence STITRGIDGMSLALFTEMTPPPNTEGGGLANA. A helical transmembrane segment spans residues 83 to 102; that stretch reads LAGSGLLILWATVFGTPLGI. Positions 83–286 constitute an ABC transmembrane type-1 domain; the sequence is LAGSGLLILW…LCVLLLNILA (204 aa). The Cytoplasmic segment spans residues 103–126; sequence MAGIYLAEYGRKSWLAEVIRFIND. Residues 127–146 form a helical membrane-spanning segment; it reads ILLSAPSIVVGLFVYTIVVA. The Periplasmic segment spans residues 147-150; it reads QMEH. Residues 151–169 traverse the membrane as a helical segment; it reads FSGWAGVIALALLQVPIVI. Residues 170–204 lie on the Cytoplasmic side of the membrane; that stretch reads RTTENMLKLVPYSLREAAYALGTPKWKMISAITLK. Residues 205–223 form a helical membrane-spanning segment; that stretch reads ASVSGIMTGILLAIARIAG. The Periplasmic segment spans residues 224 to 266; the sequence is ETAPLLFTALSNQFWSTDMMQPIANLPVTIFKFAMSPFAEWQQ. Residues 267–286 form a helical membrane-spanning segment; that stretch reads LAWAGVLIITLCVLLLNILA. The Cytoplasmic portion of the chain corresponds to 287–296; sequence RVVFAKNKHG.

This sequence belongs to the binding-protein-dependent transport system permease family. CysTW subfamily.

Its subcellular location is the cell inner membrane. Its function is as follows. Part of the binding-protein-dependent transport system for phosphate; probably responsible for the translocation of the substrate across the membrane. The polypeptide is Phosphate transport system permease protein PstA (pstA) (Escherichia coli (strain K12)).